The primary structure comprises 245 residues: DNA repair protein RecO (245 aa).

The protein belongs to the RecO family.

Functionally, involved in DNA repair and RecF pathway recombination. This is DNA repair protein RecO from Chromobacterium violaceum (strain ATCC 12472 / DSM 30191 / JCM 1249 / CCUG 213 / NBRC 12614 / NCIMB 9131 / NCTC 9757 / MK).